The sequence spans 356 residues: S-adenosylmethionine:tRNA ribosyltransferase-isomerase (356 aa).

This sequence belongs to the QueA family. As to quaternary structure, monomer.

It is found in the cytoplasm. It catalyses the reaction 7-aminomethyl-7-carbaguanosine(34) in tRNA + S-adenosyl-L-methionine = epoxyqueuosine(34) in tRNA + adenine + L-methionine + 2 H(+). It participates in tRNA modification; tRNA-queuosine biosynthesis. Transfers and isomerizes the ribose moiety from AdoMet to the 7-aminomethyl group of 7-deazaguanine (preQ1-tRNA) to give epoxyqueuosine (oQ-tRNA). The polypeptide is S-adenosylmethionine:tRNA ribosyltransferase-isomerase (Yersinia pseudotuberculosis serotype IB (strain PB1/+)).